A 234-amino-acid polypeptide reads, in one-letter code: MSKKVTKRFSELLKKVDSDKIYTLDEAVSTVKTLASAKFDETVEIALKLNVDPRHADQMVRGSVVLPAGTGKTVRVAVIAKDAKADEAKAAGADIVGAEDFVDEIAKGVINFDVLIATPNLMGLVGKIGRLLGPKGLMPNPKTGTVTMDVAQAIKNAKGGQVNFRVDKQGNIHAGLGKVSFSKDQLNDNISAFIKMINKHKPAASKGRYIKSAALSLTMSPSITLEPQELMDLK.

This sequence belongs to the universal ribosomal protein uL1 family. As to quaternary structure, part of the 50S ribosomal subunit.

Binds directly to 23S rRNA. The L1 stalk is quite mobile in the ribosome, and is involved in E site tRNA release. In terms of biological role, protein L1 is also a translational repressor protein, it controls the translation of the L11 operon by binding to its mRNA. The sequence is that of Large ribosomal subunit protein uL1 from Campylobacter fetus subsp. fetus (strain 82-40).